We begin with the raw amino-acid sequence, 106 residues long: MNDSEFHRLADTLWLAIEERLDDWDGDSDIDCEINGGVLTISFENGSKIIINRQEPLHQVWLATKQGGYHFDLKGDEWVCDRSGETFWDLLEQAATQQAGEKVSFR.

Belongs to the frataxin family.

Functionally, involved in iron-sulfur (Fe-S) cluster assembly. May act as a regulator of Fe-S biogenesis. This chain is Iron-sulfur cluster assembly protein CyaY, found in Salmonella agona (strain SL483).